A 299-amino-acid chain; its full sequence is Tetrahydromethanopterin S-methyltransferase subunit E (299 aa).

Helical transmembrane passes span 57 to 77 (AISGEPVSYGLYVAVAGSVAW), 80 to 100 (INAGLNAVLALIIGSGVAAIV), 133 to 153 (IGPIVGHGFIAVFTMVLAAYL), 158 to 178 (LGNPFPLPLVALIFGITVGAI), 237 to 257 (GLCFGLIIFLDGWRSIVGNII), and 261 to 281 (LVTKTSIALVVGLLVVVAAMI).

Belongs to the MtrE family. As to quaternary structure, the complex is composed of 8 subunits; MtrA, MtrB, MtrC, MtrD, MtrE, MtrF, MtrG and MtrH.

It is found in the cell membrane. It carries out the reaction 5-methyl-5,6,7,8-tetrahydromethanopterin + coenzyme M + 2 Na(+)(in) = 5,6,7,8-tetrahydromethanopterin + methyl-coenzyme M + 2 Na(+)(out). It participates in one-carbon metabolism; methanogenesis from CO(2); methyl-coenzyme M from 5,10-methylene-5,6,7,8-tetrahydromethanopterin: step 2/2. Its function is as follows. Part of a complex that catalyzes the formation of methyl-coenzyme M and tetrahydromethanopterin from coenzyme M and methyl-tetrahydromethanopterin. This is an energy-conserving, sodium-ion translocating step. In Methanococcus vannielii (strain ATCC 35089 / DSM 1224 / JCM 13029 / OCM 148 / SB), this protein is Tetrahydromethanopterin S-methyltransferase subunit E.